The chain runs to 879 residues: Alanine--tRNA ligase (879 aa).

Zn(2+)-binding residues include H567, H571, C669, and H673.

The protein belongs to the class-II aminoacyl-tRNA synthetase family. Zn(2+) is required as a cofactor.

It is found in the cytoplasm. The enzyme catalyses tRNA(Ala) + L-alanine + ATP = L-alanyl-tRNA(Ala) + AMP + diphosphate. Catalyzes the attachment of alanine to tRNA(Ala) in a two-step reaction: alanine is first activated by ATP to form Ala-AMP and then transferred to the acceptor end of tRNA(Ala). Also edits incorrectly charged Ser-tRNA(Ala) and Gly-tRNA(Ala) via its editing domain. In Lactobacillus helveticus (strain DPC 4571), this protein is Alanine--tRNA ligase.